Reading from the N-terminus, the 81-residue chain is U12-hexatoxin-Mg1a (81 aa).

Residues 1 to 24 (MKAPATIVILIMSLISVLWATADT) form the signal peptide. The propeptide occupies 25–50 (EDGNLLFPIEDFIRKFDEYPVQPKER). Cystine bridges form between C52–C66, C59–C71, and C65–C75. Residue P78 is modified to Proline amide.

In terms of tissue distribution, expressed by the venom gland.

Its subcellular location is the secreted. Functionally, blocks voltage-gated sodium channels (Nav). Intracranial injection into mice causes lacrimation, slow breathing and death. Intrathorax injection into crickets causes death. This Macrothele gigas (Japanese funnel web spider) protein is U12-hexatoxin-Mg1a.